We begin with the raw amino-acid sequence, 228 residues long: Ephrin-A5 (228 aa).

Positions 1–20 (MPHVEMLLLAVAALWVCVRG) are cleaved as a signal peptide. Positions 29 to 162 (ADRYAVYWNS…KLKVFVRPAN (134 aa)) constitute an Ephrin RBD domain. Residue N37 is glycosylated (N-linked (GlcNAc...) asparagine). Intrachain disulfides connect C62-C102 and C90-C151. N203 carries the GPI-anchor amidated asparagine lipid modification. Positions 204–228 (AAQTPRIPIRLLATLLFLLAMLLIL) are cleaved as a propeptide — removed in mature form.

The protein belongs to the ephrin family. In terms of tissue distribution, expressed in a graded fashion across the tectum being more strongly expressed towards the posterior pole.

The protein resides in the cell membrane. Its function is as follows. Cell surface GPI-bound ligand for Eph receptors, a family of receptor tyrosine kinases which are crucial for migration, repulsion and adhesion during neuronal, vascular and epithelial development. Binds promiscuously Eph receptors residing on adjacent cells, leading to contact-dependent bidirectional signaling into neighboring cells. Induces compartmentalized signaling within a caveolae-like membrane microdomain when bound to the extracellular domain of its cognate receptor. This signaling event requires the activity of the Fyn tyrosine kinase. Activates the EPHA3 receptor to regulate cell-cell adhesion and cytoskeletal organization. With the receptor EPHA2 may regulate lens fiber cells shape and interactions and be important for lens transparency maintenance. May function actively to stimulate axon fasciculation. Induces growth cone collapse and repulsion of retinal ganglion cell axons. This is Ephrin-A5 (EFNA5) from Gallus gallus (Chicken).